The primary structure comprises 561 residues: Cation diffusion facilitator family protein 1 (561 aa).

Residues 1-20 (MEVTMEDRSVKADKADRDDN) are compositionally biased toward basic and acidic residues. The interval 1–26 (MEVTMEDRSVKADKADRDDNNTTSTE) is disordered. At 1–112 (MEVTMEDRSV…SESVKGVSRS (112 aa)) the chain is on the cytoplasmic side. Residues 113 to 133 (LIIQIGMTVIFCALEFITGVV) traverse the membrane as a helical segment. Residues 134–136 (CSS) lie on the Extracellular side of the membrane. A helical membrane pass occupies residues 137-157 (IAMLADSYHMAADVMALIVAF). The Cytoplasmic portion of the chain corresponds to 158–176 (TCIKIATRPSTRLGYGWVR). The chain crosses the membrane as a helical span at residues 177 to 197 (AETLGGFFNGIFMCTVCVLVF). The Extracellular segment spans residues 198-215 (QEAVGRIINVHMITHPLQ). A helical membrane pass occupies residues 216 to 236 (VLVIGFIGLLINLFGMFNLSG). At 237–391 (HGHSHGGGSH…NVNIHGVWLH (155 aa)) the chain is on the cytoplasmic side. Residues 240-304 (SHGGGSHGHS…HTRLNGKFRS (65 aa)) are disordered. Residues 246 to 270 (HGHSHGGSHGHSHNNKKTKKNDGHG) form a 6 X 2 AA approximate repeats of H-G region. A compositionally biased stretch (basic residues) spans 247–264 (GHSHGGSHGHSHNNKKTK). The chain crosses the membrane as a helical span at residues 392–412 (LLSDAFGSVIVMISAGFVYFL). The Extracellular portion of the chain corresponds to 413-420 (PTWKIAAY). A helical transmembrane segment spans residues 421–441 (LDPILSISLASIMGFTAVVLV). Over 442 to 561 (KTSGEKLLKQ…SVSTENEITE (120 aa)) the chain is Cytoplasmic.

Belongs to the cation diffusion facilitator (CDF) transporter (TC 2.A.4) family. SLC30A subfamily. In terms of assembly, interacts with lin-45 in a zinc-dependent manner. As to expression, expressed in intestinal cells. Expressed in the vulva.

Its subcellular location is the basolateral cell membrane. Functionally, involved in the regulation of Pn.p cell fate determination. Involved in zinc metabolism and the decrease of the cytosolic zinc concentration which is thought to modulate Ras signaling. Involved in zinc transport from the intestinal lumen to the pseudocoelum. This Caenorhabditis elegans protein is Cation diffusion facilitator family protein 1 (cdf-1).